A 436-amino-acid polypeptide reads, in one-letter code: mRNA cap guanine-N(7) methyltransferase (436 aa).

The disordered stretch occupies residues 1–50; sequence MSTKPEKPIWMSQEDYDRQYGSITGDESSTVSKKDSKVTANAPGDGNGSL. The mRNA cap 0 methyltransferase domain occupies 141 to 424; it reads SPIIKLRNFN…FYTMFAFRKV (284 aa). An mRNA-binding site is contributed by 150-151; sequence NN. Residues Lys154, Gly172, Asp194, Asp223, Gln249, and Tyr254 each contribute to the S-adenosyl-L-methionine site.

The protein belongs to the class I-like SAM-binding methyltransferase superfamily. mRNA cap 0 methyltransferase family.

Its subcellular location is the nucleus. The enzyme catalyses a 5'-end (5'-triphosphoguanosine)-ribonucleoside in mRNA + S-adenosyl-L-methionine = a 5'-end (N(7)-methyl 5'-triphosphoguanosine)-ribonucleoside in mRNA + S-adenosyl-L-homocysteine. In terms of biological role, responsible for methylating the 5'-cap structure of mRNAs. The polypeptide is mRNA cap guanine-N(7) methyltransferase (ABD1) (Saccharomyces cerevisiae (strain ATCC 204508 / S288c) (Baker's yeast)).